We begin with the raw amino-acid sequence, 504 residues long: Glycerol kinase (504 aa).

Position 14 (T14) interacts with ADP. Positions 14, 15, and 16 each coordinate ATP. A sn-glycerol 3-phosphate-binding site is contributed by T14. R18 contributes to the ADP binding site. Positions 84, 85, 136, and 246 each coordinate sn-glycerol 3-phosphate. Glycerol-binding residues include R84, E85, Y136, D246, and Q247. ADP contacts are provided by T268 and G311. Residues T268, G311, Q315, and G412 each coordinate ATP. ADP contacts are provided by G412 and N416.

The protein belongs to the FGGY kinase family.

It carries out the reaction glycerol + ATP = sn-glycerol 3-phosphate + ADP + H(+). Its pathway is polyol metabolism; glycerol degradation via glycerol kinase pathway; sn-glycerol 3-phosphate from glycerol: step 1/1. With respect to regulation, inhibited by fructose 1,6-bisphosphate (FBP). In terms of biological role, key enzyme in the regulation of glycerol uptake and metabolism. Catalyzes the phosphorylation of glycerol to yield sn-glycerol 3-phosphate. The protein is Glycerol kinase of Aliivibrio fischeri (strain MJ11) (Vibrio fischeri).